The following is a 277-amino-acid chain: MEMO1 family protein Tpet_0837 (277 aa).

Belongs to the MEMO1 family.

This chain is MEMO1 family protein Tpet_0837, found in Thermotoga petrophila (strain ATCC BAA-488 / DSM 13995 / JCM 10881 / RKU-1).